The following is a 244-amino-acid chain: Putative outer membrane protein RC0105 (244 aa).

The signal sequence occupies residues 1-23 (MLRIVKKLGIILFVSTISINSFA).

Belongs to the OmpW/AlkL family.

It is found in the cell outer membrane. The polypeptide is Putative outer membrane protein RC0105 (Rickettsia conorii (strain ATCC VR-613 / Malish 7)).